Consider the following 447-residue polypeptide: Serine/threonine-protein phosphatase 2A 55 kDa regulatory subunit B alpha isoform (447 aa).

N-acetylalanine is present on Ala-2. WD repeat units lie at residues 11-80 (QWCF…FQSH), 94-174 (EKIN…IFAN), 175-218 (AHTY…VDIK), 227-270 (EVIT…KLFE), 288-325 (ISDV…TYQV), 347-381 (ECCW…TLEA), and 414-446 (DFNK…QDKV).

Belongs to the phosphatase 2A regulatory subunit B family. PP2A consists of a common heterodimeric core enzyme, composed of a 36 kDa catalytic subunit (subunit C) and a 65 kDa constant regulatory subunit (PR65 or subunit A), that associates with a variety of regulatory subunits. Proteins that associate with the core dimer include three families of regulatory subunits B (the R2/B/PR55/B55, R3/B''/PR72/PR130/PR59 and R5/B'/B56 families), the 48 kDa variable regulatory subunit, viral proteins, and cell signaling molecules. Interacts with the PP2A C catalytic subunit PPP2CA. Interacts with the PP2A A subunit PPP2R1A. Found in a complex with at least ARL2, PPP2CB, PPP2R1A, PPP2R2A, PPP2R5E and TBCD. Interacts with MFHAS1; the interaction is direct. Interacts with PABIR1/FAM122A (via its N-terminus); the interaction is direct and inhibits PP2A activity. Interacts with ARPP19; the interaction is direct and inhibits PP2A activity. Interacts with CRTC3. In terms of tissue distribution, brain.

Substrate-recognition subunit of protein phosphatase 2A (PP2A) that plays a key role in cell cycle by controlling mitosis entry and exit. Involved in chromosome clustering during late mitosis by mediating dephosphorylation of MKI67. Essential for serine/threonine-protein phosphatase 2A-mediated dephosphorylation of WEE1, preventing its ubiquitin-mediated proteolysis, increasing WEE1 protein levels, and promoting the G2/M checkpoint. The sequence is that of Serine/threonine-protein phosphatase 2A 55 kDa regulatory subunit B alpha isoform (Ppp2r2a) from Rattus norvegicus (Rat).